A 783-amino-acid chain; its full sequence is Polyribonucleotide nucleotidyltransferase 1, mitochondrial (783 aa).

The N-terminal 45 residues, 1–45, are a transit peptide targeting the mitochondrion; that stretch reads MAACRYCCSCLRLRPLSDGPFLLPRRDRALTQLQVRALWSSAGSR. N6-acetyllysine is present on residues K250, K264, K285, and K289. K552 carries the N6-succinyllysine modification. Residues 605-664 form the KH domain; that stretch reads PVVETVQVPLSKRAKFVGPGGYNLKKLQAETGVTISQVDEETFSVFAPTPSAMHEARDFI. Residues 679–750 enclose the S1 motif domain; it reads GAVYTATITE…ADGRMRLSRK (72 aa). 2 positions are modified to phosphoserine: S754 and S782.

This sequence belongs to the polyribonucleotide nucleotidyltransferase family. Homotrimer; in free form. Homooligomer. Component of the mitochondrial degradosome (mtEXO) complex which is a heteropentamer containing 2 copies of SUPV3L1 and 3 copies of PNPT1. As part of the mitochondrial degradosome complex, interacts with GRSF1 in an RNA-dependent manner; the interaction enhances the activity of the complex. Interacts with TCL1A; the interaction has no effect on PNPT1 exonuclease activity.

The protein resides in the cytoplasm. The protein localises to the mitochondrion matrix. It localises to the mitochondrion intermembrane space. It carries out the reaction RNA(n+1) + phosphate = RNA(n) + a ribonucleoside 5'-diphosphate. RNA-binding protein implicated in numerous RNA metabolic processes. Catalyzes the phosphorolysis of single-stranded polyribonucleotides processively in the 3'-to-5' direction. Mitochondrial intermembrane factor with RNA-processing exoribonulease activity. Component of the mitochondrial degradosome (mtEXO) complex, that degrades 3' overhang double-stranded RNA with a 3'-to-5' directionality in an ATP-dependent manner. Involved in the degradation of non-coding mitochondrial transcripts (MT-ncRNA) and tRNA-like molecules. Required for correct processing and polyadenylation of mitochondrial mRNAs. Plays a role as a cytoplasmic RNA import factor that mediates the translocation of small RNA components, like the 5S RNA, the RNA subunit of ribonuclease P and the mitochondrial RNA-processing (MRP) RNA, into the mitochondrial matrix. Plays a role in mitochondrial morphogenesis and respiration; regulates the expression of the electron transport chain (ETC) components at the mRNA and protein levels. In the cytoplasm, shows a 3'-to-5' exoribonuclease mediating mRNA degradation activity; degrades c-myc mRNA upon treatment with IFNB1/IFN-beta, resulting in a growth arrest in melanoma cells. Regulates the stability of specific mature miRNAs in melanoma cells; specifically and selectively degrades miR-221, preferentially. Also plays a role in RNA cell surveillance by cleaning up oxidized RNAs. Binds to the RNA subunit of ribonuclease P, MRP RNA and miR-221 microRNA. The chain is Polyribonucleotide nucleotidyltransferase 1, mitochondrial from Homo sapiens (Human).